The following is a 489-amino-acid chain: Cytochrome P450 2C70 (489 aa).

Positions 1–27 (MALFIFLGIWLSCFLFLFLWNQHRGRG) are cleaved as a signal peptide. Position 434 (C434) interacts with heme.

This sequence belongs to the cytochrome P450 family. Heme serves as cofactor. In terms of tissue distribution, expressed in liver.

The protein resides in the endoplasmic reticulum membrane. It localises to the microsome membrane. The enzyme catalyses chenodeoxycholate + reduced [NADPH--hemoprotein reductase] + O2 = alpha-muricholate + oxidized [NADPH--hemoprotein reductase] + H2O + H(+). It catalyses the reaction ursodeoxycholate + reduced [NADPH--hemoprotein reductase] + O2 = beta-muricholate + oxidized [NADPH--hemoprotein reductase] + H2O + H(+). In terms of biological role, a cytochrome P450 monooxygenase involved in muricholic acid (MCA) synthesis. Hydroxylates at the 6-beta position two major bile acids, chenodeoxycholic acid (CDCA) and ursodeoxycholic acid (UDCA) to form alpha-MCA and beta-MCA, respectively. May regulate NR1H4/farnesoid X receptor signaling, as taurine-conjugated MCAs are antagonists of NR1H4. Mechanistically, uses molecular oxygen inserting one oxygen atom into a substrate, and reducing the second into a water molecule, with two electrons provided by NADPH via cytochrome P450 reductase (CPR; NADPH-ferrihemoprotein reductase). In Mus musculus (Mouse), this protein is Cytochrome P450 2C70.